The primary structure comprises 717 residues: DNA-directed RNA polymerase subunit beta' (717 aa).

Zn(2+) is bound by residues C71, C73, C91, and C94. Residues D481, D483, and D485 each coordinate Mg(2+).

It belongs to the RNA polymerase beta' chain family. RpoC1 subfamily. In terms of assembly, in plastids the minimal PEP RNA polymerase catalytic core is composed of four subunits: alpha, beta, beta', and beta''. When a (nuclear-encoded) sigma factor is associated with the core the holoenzyme is formed, which can initiate transcription. Mg(2+) is required as a cofactor. Requires Zn(2+) as cofactor.

The protein localises to the plastid. The protein resides in the chloroplast. It carries out the reaction RNA(n) + a ribonucleoside 5'-triphosphate = RNA(n+1) + diphosphate. Functionally, DNA-dependent RNA polymerase catalyzes the transcription of DNA into RNA using the four ribonucleoside triphosphates as substrates. The protein is DNA-directed RNA polymerase subunit beta' of Chlorokybus atmophyticus (Soil alga).